Consider the following 428-residue polypeptide: Keratin, type I cytoskeletal 18-A (428 aa).

The tract at residues 2–78 (SFRSQTSSTT…SVKGSGLFNN (77 aa)) is head. The interval 79–114 (EKETMQILNDRLASYLETVRNLEQANSKLELQIRET) is coil 1A. The IF rod domain occupies 79-390 (EKETMQILND…RLLDGEDFRL (312 aa)). The linker 1 stretch occupies residues 115–131 (LEKRGPTTQDYSAYEKV). Residues 132–223 (VEDLKSQIYD…RSHQTDVEEL (92 aa)) are coil 1B. Positions 224–247 (RKHISECGVQVDVDAPKGQDLSKI) are linker 12. The tract at residues 248–385 (MEEIRAQYET…IATYRRLLDG (138 aa)) is coil 2. The tail stretch occupies residues 386 to 428 (EDFRLQDALAVQTTKVQKKITVTETVVDGKVVSQSSEVQEIKK).

This sequence belongs to the intermediate filament family. As to quaternary structure, heterotetramer of two type I and two type II keratins. Keratin-18 associates with keratin-8. In terms of processing, phosphorylated. Post-translationally, proteolytically cleaved by caspases during epithelial cell apoptosis.

Its function is as follows. When phosphorylated, plays a role in filament reorganization. The chain is Keratin, type I cytoskeletal 18-A from Polypterus senegalus (Senegal bichir).